The following is a 166-amino-acid chain: Peptidyl-prolyl cis-trans isomerase-like 1 (166 aa).

In terms of domain architecture, PPIase cyclophilin-type spans 10–164 (QPPNVYLETS…DDVKILKAYP (155 aa)). Cyclosporin A contacts are provided by residues 54 to 65 (HRIIKDFMIQGG), 70 to 71 (TG), 99 to 104 (AMANAG), 109 to 113 (GSQFF), threonine 119, and lysine 125. Serine 149 carries the phosphoserine modification.

The protein belongs to the cyclophilin-type PPIase family. PPIL1 subfamily. As to quaternary structure, identified in the spliceosome C complex. Interacts with SNW1/SKIP. Interacts with CDC40/PRP17; this interaction leads to CDC40 isomerization. Interacts with RBM22.

It localises to the nucleus. The enzyme catalyses [protein]-peptidylproline (omega=180) = [protein]-peptidylproline (omega=0). With respect to regulation, inhibited by Cyclosporin A. Involved in pre-mRNA splicing as component of the spliceosome. PPIases accelerate the folding of proteins. It catalyzes the cis-trans isomerization of proline imidic peptide bonds in oligopeptides. Catalyzes prolyl peptide bond isomerization in CDC40/PRP17. Plays an important role in embryonic brain development; this function is independent of its isomerase activity. This is Peptidyl-prolyl cis-trans isomerase-like 1 (Ppil1) from Mus musculus (Mouse).